We begin with the raw amino-acid sequence, 438 residues long: Transmembrane protein 184C (438 aa).

The next 7 helical transmembrane spans lie at 17–37, 48–68, 86–106, 179–199, 212–232, 254–274, and 287–307; these read LVAV…VWEL, AWFI…WVIL, ILWM…YPGI, YTVV…LGIY, YLVI…LLFY, VVFV…VGVI, and AVAT…AAIA. The tract at residues 355–438 is disordered; it reads RGHPRKKLFP…KEPSDKSVDS (84 aa). 2 stretches are compositionally biased toward low complexity: residues 374-390 and 404-413; these read SLLS…ASSM and TVTPQTTPTT. Ser-422 is modified (phosphoserine). The span at 425–438 shows a compositional bias: basic and acidic residues; the sequence is IGEKKEPSDKSVDS.

This sequence belongs to the TMEM184 family. Widely expressed with higher expression in lung, kidney, spleen, pancreas, thymus, prostate, testis, ovary, small intestine and thyroid.

It is found in the membrane. Possible tumor suppressor which may play a role in cell growth. The polypeptide is Transmembrane protein 184C (TMEM184C) (Homo sapiens (Human)).